Consider the following 361-residue polypeptide: Peptide chain release factor 1 (361 aa).

Q237 bears the N5-methylglutamine mark. The disordered stretch occupies residues 287–306; it reads KRAAEEASTRKSLVGSGDRS.

The protein belongs to the prokaryotic/mitochondrial release factor family. Methylated by PrmC. Methylation increases the termination efficiency of RF1.

The protein localises to the cytoplasm. Peptide chain release factor 1 directs the termination of translation in response to the peptide chain termination codons UAG and UAA. In Alteromonas mediterranea (strain DSM 17117 / CIP 110805 / LMG 28347 / Deep ecotype), this protein is Peptide chain release factor 1.